A 133-amino-acid polypeptide reads, in one-letter code: Putative pre-16S rRNA nuclease (133 aa).

The protein belongs to the YqgF nuclease family.

It localises to the cytoplasm. Its function is as follows. Could be a nuclease involved in processing of the 5'-end of pre-16S rRNA. The protein is Putative pre-16S rRNA nuclease of Dehalococcoides mccartyi (strain ATCC BAA-2266 / KCTC 15142 / 195) (Dehalococcoides ethenogenes (strain 195)).